The primary structure comprises 121 residues: Large ribosomal subunit protein uL24 (121 aa).

It belongs to the universal ribosomal protein uL24 family. Part of the 50S ribosomal subunit.

One of two assembly initiator proteins, it binds directly to the 5'-end of the 23S rRNA, where it nucleates assembly of the 50S subunit. In terms of biological role, located at the polypeptide exit tunnel on the outside of the subunit. The polypeptide is Large ribosomal subunit protein uL24 (Thermococcus kodakarensis (strain ATCC BAA-918 / JCM 12380 / KOD1) (Pyrococcus kodakaraensis (strain KOD1))).